We begin with the raw amino-acid sequence, 382 residues long: Succinate--CoA ligase [ADP-forming] subunit beta (382 aa).

The ATP-grasp domain maps to 9 to 240 (KELFLRYGVK…PRDITEFEAY (232 aa)). ATP-binding positions include Lys45, 52-54 (GRG), Val94, and Glu99. Mg(2+) is bound by residues Asn193 and Asp207. Residues Asn260 and 317 to 319 (GIT) each bind substrate.

This sequence belongs to the succinate/malate CoA ligase beta subunit family. In terms of assembly, heterotetramer of two alpha and two beta subunits. Mg(2+) is required as a cofactor.

The catalysed reaction is succinate + ATP + CoA = succinyl-CoA + ADP + phosphate. It carries out the reaction GTP + succinate + CoA = succinyl-CoA + GDP + phosphate. The protein operates within carbohydrate metabolism; tricarboxylic acid cycle; succinate from succinyl-CoA (ligase route): step 1/1. Functionally, succinyl-CoA synthetase functions in the citric acid cycle (TCA), coupling the hydrolysis of succinyl-CoA to the synthesis of either ATP or GTP and thus represents the only step of substrate-level phosphorylation in the TCA. The beta subunit provides nucleotide specificity of the enzyme and binds the substrate succinate, while the binding sites for coenzyme A and phosphate are found in the alpha subunit. This chain is Succinate--CoA ligase [ADP-forming] subunit beta, found in Pyrobaculum islandicum (strain DSM 4184 / JCM 9189 / GEO3).